Here is a 157-residue protein sequence, read N- to C-terminus: Myosin essential light chain, striated adductor muscle (157 aa).

2 consecutive EF-hand domains span residues 7-44 and 82-117; these read DEID…LGIN and GTFA…LGER.

In molluscan muscle, calcium regulation is associated with myosin rather than with actin. Muscle myosin contains two types of light chains: the catalytic light chain, essential for ATPase activity, and the regulatory light chain, a calcium-binding protein responsible for Ca(2+) dependent binding and Ca(2+) dependent Mg-ATPase activity. This is Myosin essential light chain, striated adductor muscle from Argopecten irradians (Bay scallop).